The chain runs to 946 residues: Protein TMA108 (946 aa).

The residue at position 2 (S2) is an N-acetylserine. Position 293–297 (293–297 (MAMEN)) interacts with substrate. H330 provides a ligand contact to Zn(2+). E331 functions as the Proton acceptor in the catalytic mechanism. Zn(2+)-binding residues include H334 and E353.

This sequence belongs to the peptidase M1 family. In terms of assembly, associates with ribosomal complexes. Zn(2+) serves as cofactor.

Its subcellular location is the cytoplasm. Functionally, putative zinc aminopeptidase which may be involved in ribosome biogenesis. The chain is Protein TMA108 (TMA108) from Saccharomyces cerevisiae (strain ATCC 204508 / S288c) (Baker's yeast).